A 949-amino-acid chain; its full sequence is Protein translocase subunit SecA (949 aa).

Residues Gln-87, 105–109 (GEGKT), and Asp-524 each bind ATP. 2 disordered regions span residues 852–876 (PPPG…SSGG) and 896–939 (LEFS…GSGK). Positions 933, 935, 944, and 945 each coordinate Zn(2+).

Belongs to the SecA family. As to quaternary structure, monomer and homodimer. Part of the essential Sec protein translocation apparatus which comprises SecA, SecYEG and auxiliary proteins SecDF-YajC and YidC. Zn(2+) serves as cofactor.

The protein resides in the cell inner membrane. It is found in the cytoplasm. The enzyme catalyses ATP + H2O + cellular proteinSide 1 = ADP + phosphate + cellular proteinSide 2.. Functionally, part of the Sec protein translocase complex. Interacts with the SecYEG preprotein conducting channel. Has a central role in coupling the hydrolysis of ATP to the transfer of proteins into and across the cell membrane, serving both as a receptor for the preprotein-SecB complex and as an ATP-driven molecular motor driving the stepwise translocation of polypeptide chains across the membrane. The chain is Protein translocase subunit SecA from Methylocella silvestris (strain DSM 15510 / CIP 108128 / LMG 27833 / NCIMB 13906 / BL2).